We begin with the raw amino-acid sequence, 747 residues long: DNA damage checkpoint protein LCD1 (747 aa).

3 positions are modified to phosphoserine: serine 10, serine 11, and serine 76. A coiled-coil region spans residues 62 to 139 (NQLVNQLNKA…MEARGKSKRE (78 aa)). Residues 145 to 180 (KPPSTTLSTNTNTITPDSSSVAIEAKPQSPQSKKRK) form a disordered region. Over residues 146 to 160 (PPSTTLSTNTNTITP) the composition is skewed to low complexity.

In terms of assembly, forms a complex with MEC1. Post-translationally, phosphorylated by MEC1 in a cell cycle dependent manner and in response to DNA damage.

The protein localises to the cytoplasm. The protein resides in the nucleus. In terms of biological role, forms a complex with the serine/threonine kinase MEC1 which activates checkpoint signaling upon genotoxic stresses. The MEC1-LCD1 complex is recruited by the single-strand-binding protein complex RPA to DNA lesions in order to initiate the DNA repair by homologous recombination, after the MRX-complex and TEL1 are displaced. Required for the recruitment of MEC1 to DNA lesions, the activation of CHK1 and RAD53 kinases and phosphorylation of RAD9 in response to DNA damage. Required for cell growth and meiotic recombination. The chain is DNA damage checkpoint protein LCD1 (LCD1) from Saccharomyces cerevisiae (strain ATCC 204508 / S288c) (Baker's yeast).